Here is a 222-residue protein sequence, read N- to C-terminus: Orotidine 5'-phosphate decarboxylase (222 aa).

Residues Asp-11, Lys-30, 59–68, Ser-115, 164–174, Gly-187, and Arg-188 contribute to the substrate site; these read DFKLADIGYI and PGMGSQGGSYG. Lys-61 functions as the Proton donor in the catalytic mechanism.

This sequence belongs to the OMP decarboxylase family. Type 1 subfamily. As to quaternary structure, homodimer.

It carries out the reaction orotidine 5'-phosphate + H(+) = UMP + CO2. It participates in pyrimidine metabolism; UMP biosynthesis via de novo pathway; UMP from orotate: step 2/2. Catalyzes the decarboxylation of orotidine 5'-monophosphate (OMP) to uridine 5'-monophosphate (UMP). This chain is Orotidine 5'-phosphate decarboxylase, found in Saccharolobus solfataricus (strain ATCC 35092 / DSM 1617 / JCM 11322 / P2) (Sulfolobus solfataricus).